We begin with the raw amino-acid sequence, 169 residues long: MSTVKGQTRRERPRGARPHGLTKQKRQEIKEAFDLFDTDNSGTIDAKELNVAMRALGFEMTEEQINQMIADVDKDGSGSIDYEEFEHMMTAKIGERDSKEELTKAFSIIDQDKNGKISDVDIQRIAKELGENFTYQEIQEMVQEADRNGDGEIDFDEFIRMMRRTGYGY.

A disordered region spans residues 1-26; the sequence is MSTVKGQTRRERPRGARPHGLTKQKR. A compositionally biased stretch (basic residues) spans 15–24; that stretch reads GARPHGLTKQ. EF-hand domains are found at residues 24 to 59, 60 to 95, 97 to 132, and 133 to 168; these read QKRQ…LGFE, MTEE…KIGE, DSKE…LGEN, and FTYQ…TGYG. D37, D39, S41, T43, E48, D73, D75, S77, S79, E84, D110, D112, N114, K116, D121, D146, N148, D150, E152, and E157 together coordinate Ca(2+).

In terms of biological role, potential calcium sensor. The chain is Probable calcium-binding protein CML13 (CML13) from Oryza sativa subsp. japonica (Rice).